The primary structure comprises 126 residues: Small ribosomal subunit protein uS12 (126 aa).

The segment at 1-26 (MPTINQLVRKGRASETTKSKSPALQD) is disordered. At D89 the chain carries 3-methylthioaspartic acid. Positions 103–126 (DTQGVKDRKQARSKYGAKRAKAGK) are disordered. Residues 113-126 (ARSKYGAKRAKAGK) show a composition bias toward basic residues.

Belongs to the universal ribosomal protein uS12 family. In terms of assembly, part of the 30S ribosomal subunit. Contacts proteins S8 and S17. May interact with IF1 in the 30S initiation complex.

Functionally, with S4 and S5 plays an important role in translational accuracy. In terms of biological role, interacts with and stabilizes bases of the 16S rRNA that are involved in tRNA selection in the A site and with the mRNA backbone. Located at the interface of the 30S and 50S subunits, it traverses the body of the 30S subunit contacting proteins on the other side and probably holding the rRNA structure together. The combined cluster of proteins S8, S12 and S17 appears to hold together the shoulder and platform of the 30S subunit. The sequence is that of Small ribosomal subunit protein uS12 from Paraburkholderia xenovorans (strain LB400).